Consider the following 508-residue polypeptide: Lysine--tRNA ligase (508 aa).

Glu418 and Glu425 together coordinate Mg(2+).

This sequence belongs to the class-II aminoacyl-tRNA synthetase family. In terms of assembly, homodimer. It depends on Mg(2+) as a cofactor.

It is found in the cytoplasm. It carries out the reaction tRNA(Lys) + L-lysine + ATP = L-lysyl-tRNA(Lys) + AMP + diphosphate. The protein is Lysine--tRNA ligase of Burkholderia pseudomallei (strain K96243).